A 176-amino-acid chain; its full sequence is Thiol:disulfide interchange protein HelX (176 aa).

A signal peptide spans 1 to 19 (MAKPLMFLPLLVMAGFVGA). The region spanning 35-172 (ALAGKEAPAV…ITKKIDPLLA (138 aa)) is the Thioredoxin domain. Cysteines 75 and 78 form a disulfide.

This sequence belongs to the thioredoxin family. DsbE subfamily.

It localises to the periplasm. Functionally, required for disulfide bond formation in some periplasmic proteins. Also acts as a disulfide oxidoreductase in cytochromes c biogenesis. The cysteines of apocytochromes c must be in the reduced state for covalent linkage between the two moieties to occur. This chain is Thiol:disulfide interchange protein HelX (helX), found in Rhodobacter capsulatus (strain ATCC BAA-309 / NBRC 16581 / SB1003).